Reading from the N-terminus, the 700-residue chain is MGSLSPLSLLWGLLLLQGVLRPLRGDPVFIPPFIRMSSPEVRATLVGGSEDVAVSLSLLQVEEGVLPVPTCGGRRNETVDWNVTVSPRESTLEVTIRWKRGLDWCSADETASFSEPPCVLQMLLVSASHNASCLAHLLIQVEIYPNTSVTHNASENMTVIPNQVYQPLGPCPCDLTAKACDIQCCCDQDCQPEVRELFAQSCFSGVFGGHVSPPSHHHCAVSTTHQTPDWFPLLCVQSPPSTSPFLGHFYHGATSPRHSPGFEAHLHFDLRDFADASYKQGDPIMTTEGYFTIPQVSLAGQCLQDAPVAFLRNFDSVCTMDLEVHQGRDEIVLENMKIRTTGGPVTPTVTYEEAIDLDKFITSPDTVLSVGSAPRNVNVEEHYVFRWQNNSISGLDITVIRAEISAQQRGMMTQRFTVKFLSHHSGGEKEFSGNPGYQLGKPVRALHTAGMNVSTLHLWQPAGRGLCTAAALRPILFGENAFSGCLLEVGIKENCTQLRENVLQRLDLLTQATHVARRGNSDYSDLSDGWLEIIRAEAPDTGADLPLSSVNGVCPEVPARLSIRILTAEAGSVEGVAQREILAVETRFSTVTWQYQCGLTCEDKADLLPLSASVEFINVPAQMPHPPTRFQINFTEYDCTRNELCWPQLLYPLTQYYQGEPQSQCVAKGLMLLSLLMLAILLRHPWVRMCKARDSAAIYH.

An N-terminal signal peptide occupies residues 1-25 (MGSLSPLSLLWGLLLLQGVLRPLRG). At 26-665 (DPVFIPPFIR…YYQGEPQSQC (640 aa)) the chain is on the extracellular side. 5 N-linked (GlcNAc...) asparagine glycosylation sites follow: Asn76, Asn82, Asn146, Asn156, and Asn389. A helical transmembrane segment spans residues 666–682 (VAKGLMLLSLLMLAILL). At 683–700 (RHPWVRMCKARDSAAIYH) the chain is on the cytoplasmic side.

It belongs to the tectonic family. In terms of assembly, part of the tectonic-like complex (also named B9 complex). As to expression, significant expression is observed in brain, kidney and eye.

The protein resides in the membrane. It is found in the cytoplasm. It localises to the cytoskeleton. The protein localises to the cilium basal body. In terms of biological role, component of the tectonic-like complex, a complex localized at the transition zone of primary cilia and acting as a barrier that prevents diffusion of transmembrane proteins between the cilia and plasma membranes. Required for hedgehog signaling transduction. The sequence is that of Tectonic-2 (Tctn2) from Mus musculus (Mouse).